Reading from the N-terminus, the 109-residue chain is Cell division protein ZapA (109 aa).

Positions 21 to 97 (PEQQEALNQA…QTIEQALVEQ (77 aa)) form a coiled coil.

Belongs to the ZapA family. Type 1 subfamily. Homodimer. Interacts with FtsZ.

Its subcellular location is the cytoplasm. Activator of cell division through the inhibition of FtsZ GTPase activity, therefore promoting FtsZ assembly into bundles of protofilaments necessary for the formation of the division Z ring. It is recruited early at mid-cell but it is not essential for cell division. In Sodalis glossinidius (strain morsitans), this protein is Cell division protein ZapA.